We begin with the raw amino-acid sequence, 798 residues long: Probable serine/threonine-protein kinase DDB_G0276461 (798 aa).

One can recognise a Protein kinase domain in the interval 54–324 (VTEVKLVAEG…DLLNYLNEIR (271 aa)). ATP-binding positions include 60-68 (VAEGGFGFV) and Lys82. The Proton acceptor role is filled by Asp185. Disordered regions lie at residues 330–538 (GLQT…NGNF), 553–645 (TNGS…SYNN), and 659–798 (SSAS…FGIL). 6 stretches are compositionally biased toward low complexity: residues 335 to 406 (SSNN…NTPN), 429 to 490 (SNSN…NNNN), 506 to 538 (PSPSNSNSNVIINNTNSSGKNNQNKSNSGNGNF), 557 to 603 (TNFE…INNS), 611 to 642 (SSGSLPQSRQSSFNSTPQQQQQQFNSSTNSGS), and 659 to 678 (SSASISSSGGVSNNSDNSWN). The segment covering 679–697 (VTLTPSQSNKNSTGNLKPL) has biased composition (polar residues). Residues 698–716 (NNNNNNNNNNNNRFANNTN) show a composition bias toward low complexity. Over residues 717-769 (SSRDYSFDFSSPNTSNNNDFGSFVQPSSSSSLNTTHFSKPNYNVNLNQTTSMT) the composition is skewed to polar residues. Positions 770–790 (NNYNNNNYNNNNNSNNNNNNS) are enriched in low complexity.

This sequence belongs to the protein kinase superfamily. Ser/Thr protein kinase family.

It catalyses the reaction L-seryl-[protein] + ATP = O-phospho-L-seryl-[protein] + ADP + H(+). The catalysed reaction is L-threonyl-[protein] + ATP = O-phospho-L-threonyl-[protein] + ADP + H(+). The protein is Probable serine/threonine-protein kinase DDB_G0276461 of Dictyostelium discoideum (Social amoeba).